Here is a 661-residue protein sequence, read N- to C-terminus: Peroxisomal acyl-coenzyme A oxidase 1 (661 aa).

Ser26 bears the Phosphoserine mark. Position 65 is an N6-acetyllysine (Lys65). Lys89 and Lys90 each carry N6-succinyllysine. Residue Thr139 participates in FAD binding. Lys159 is modified (N6-succinyllysine). Gly178 is a binding site for FAD. Lys216 is subject to N6-acetyllysine. Lys241 is modified (N6-succinyllysine). Lys255, Lys267, and Lys272 each carry N6-acetyllysine. An N6-succinyllysine modification is found at Lys349. Glu421 functions as the Proton acceptor in the catalytic mechanism. An N6-acetyllysine; alternate mark is found at Lys437 and Lys446. Residues Lys437 and Lys446 each carry the N6-succinyllysine; alternate modification. At Lys500 the chain carries N6-acetyllysine. Lys512 is subject to N6-acetyllysine; alternate. Lys512 bears the N6-succinyllysine; alternate mark. Position 542 is an N6-succinyllysine (Lys542). Lys637 is modified (N6-acetyllysine; alternate). N6-succinyllysine; alternate is present on Lys637. Position 643 is an N6-succinyllysine (Lys643). Ser649 carries the post-translational modification Phosphoserine. The residue at position 652 (Lys652) is an N6-acetyllysine. At Lys655 the chain carries N6-succinyllysine. The Microbody targeting signal signature appears at 659 to 661 (SKL).

Belongs to the acyl-CoA oxidase family. Homodimer. The enzyme contains three components A, B and C, the latter two being produced from the first by a proteolytic cleavage. Interacts with LONP2. FAD serves as cofactor. Expressed in Schwann cells. Expressed (at protein level) in liver.

It localises to the peroxisome. The enzyme catalyses a 2,3-saturated acyl-CoA + O2 = a (2E)-enoyl-CoA + H2O2. It catalyses the reaction hexadecanoyl-CoA + O2 = (2E)-hexadecenoyl-CoA + H2O2. It carries out the reaction dodecanoyl-CoA + O2 = (2E)-dodecenoyl-CoA + H2O2. The catalysed reaction is octanoyl-CoA + O2 = (2E)-octenoyl-CoA + H2O2. The enzyme catalyses decanoyl-CoA + O2 = (2E)-decenoyl-CoA + H2O2. It catalyses the reaction tetradecanoyl-CoA + O2 = (2E)-tetradecenoyl-CoA + H2O2. It carries out the reaction hexadecanedioyl-CoA + O2 = (2E)-hexadecenedioyl-CoA + H2O2. The catalysed reaction is tetracosanoyl-CoA + O2 = (2E)-tetracosenoyl-CoA + H2O2. The enzyme catalyses glutaryl-CoA + O2 = (2E)-glutaconyl-CoA + H2O2. It catalyses the reaction hexanoyl-CoA + O2 = (2E)-hexenoyl-CoA + H2O2. It carries out the reaction octadecanoyl-CoA + O2 = (2E)-octadecenoyl-CoA + H2O2. The catalysed reaction is (5Z,8Z,11Z,14Z,17Z)-eicosapentaenoyl-CoA + O2 = (2E,5Z,8Z,11Z,14Z,17Z)-icosahexaenoyl-CoA + H2O2. The enzyme catalyses (6Z,9Z,12Z,15Z,18Z,21Z)-tetracosahexaenoyl-CoA + O2 = (2E,6Z,9Z,12Z,15Z,18Z,21Z)-tetracosaheptaenoyl-CoA + H2O2. The protein operates within lipid metabolism; peroxisomal fatty acid beta-oxidation. Its function is as follows. Involved in the initial and rate-limiting step of peroxisomal beta-oxidation of straight-chain saturated and unsaturated very-long-chain fatty acids. Catalyzes the desaturation of fatty acyl-CoAs such as palmitoyl-CoA (hexadecanoyl-CoA) to 2-trans-enoyl-CoAs ((2E)-enoyl-CoAs) such as (2E)-hexadecenoyl-CoA, and donates electrons directly to molecular oxygen (O(2)), thereby producing hydrogen peroxide (H(2)O(2)). Shows highest activity against medium-chain fatty acyl-CoAs. Shows optimum activity with a chain length of 10 carbons (decanoyl-CoA) in vitro. In terms of biological role, is active against a much broader range of substrates and shows activity towards long-chain acyl-CoAs. This is Peroxisomal acyl-coenzyme A oxidase 1 from Rattus norvegicus (Rat).